The sequence spans 748 residues: Proton-associated sugar transporter A (748 aa).

The next 6 helical transmembrane spans lie at 93–113, 123–143, 155–175, 191–211, 233–253, and 268–288; these read ILFG…PVLL, SLVW…LGAW, RPFI…LLNG, WGLL…DSAD, IHAL…GIHW, and VIYL…LVSI. The interval 294–339 is disordered; that stretch reads RPPSEKRAAMKSPSLPLPPSPPVLPEEGPGDSLPSHTATNFSSPIS. Residues 308 to 317 show a composition bias toward pro residues; the sequence is LPLPPSPPVL. The residue at position 497 (threonine 497) is a Phosphothreonine. 6 helical membrane-spanning segments follow: residues 533 to 553, 573 to 593, 600 to 620, 627 to 647, 685 to 705, and 708 to 728; these read GWLS…EVVF, VTMG…YSAI, FLSV…GTGL, LYVV…LCTL, FLAQ…VGSA, and VMYF…LFVI.

Belongs to the glycoside-pentoside-hexuronide (GPH) cation symporter transporter (TC 2.A.2) family. As to expression, expressed in adult heart, brain, muscle and kidney, with very strong expression in brain. Also expressed in fetal brain, kidney and lung.

It localises to the membrane. It catalyses the reaction D-galactose(in) + H(+)(in) = D-galactose(out) + H(+)(out). The catalysed reaction is D-glucose(out) + H(+)(out) = D-glucose(in) + H(+)(in). In terms of biological role, proton-associated glucose transporter in the brain. This is Proton-associated sugar transporter A from Homo sapiens (Human).